The primary structure comprises 1558 residues: Arginine-glutamic acid dipeptide repeats protein (1558 aa).

Positions 1–36 (MTADKDKDKDKEKDRDRDRDRERDKRDKARESENAR) are enriched in basic and acidic residues. Positions 1–90 (MTADKDKDKD…KKKSRYERTD (90 aa)) are disordered. Phosphoserine is present on residues serine 53 and serine 56. The segment covering 74–85 (KSRKKPPKKKSR) has biased composition (basic residues). Residues 103–283 (VVYRPGDCVY…PETRRLNSTQ (181 aa)) enclose the BAH domain. Residue threonine 120 is modified to Phosphothreonine. A phosphoserine mark is found at serine 142 and serine 304. An ELM2 domain is found at 284–387 (GEIRVGPSHQ…KALQRLVKKP (104 aa)). One can recognise an SANT domain in the interval 391–443 (LIEKCWTEDEVKRFVKGLRQYGKNFFRIRKELLPSKETGELITFYYYWKKTPE). The disordered stretch occupies residues 464–495 (TRTASTPVNTPSRPPSSEFLDLSSASEDDFDS). Over residues 465-474 (RTASTPVNTP) the composition is skewed to polar residues. Low complexity predominate over residues 479-488 (SSEFLDLSSA). Residues 507–532 (CRHCFTTTSKDWHHGGRENILLCTDC) form a GATA-type zinc finger. A disordered region spans residues 542–1125 (LPPIEKPVDP…PSHASQSARF (584 aa)). Residue lysine 560 forms a Glycyl lysine isopeptide (Lys-Gly) (interchain with G-Cter in SUMO2) linkage. Phosphothreonine is present on threonine 593. Serine 594, serine 600, and serine 613 each carry phosphoserine. Low complexity predominate over residues 609–623 (SGRNSPSAASTSSND). Positions 624-640 (SKAETVKKSAKKVKEEA) are enriched in basic and acidic residues. Lysine 637 is covalently cross-linked (Glycyl lysine isopeptide (Lys-Gly) (interchain with G-Cter in SUMO2)). Phosphoserine occurs at positions 642, 656, 675, and 679. Positions 652 to 673 (EKVASDTEDTDRITSKKTKTQE) are enriched in basic and acidic residues. The span at 688–708 (SDSRSVNDEGSSDPKDIDQDN) shows a compositional bias: basic and acidic residues. Residues 709–720 (RSTSPSIPSPQD) show a composition bias toward polar residues. Residues 726 to 752 (DSSAQQQMLQAQPPALQAPSGAASAPS) are compositionally biased toward low complexity. Residues 778 to 792 (SPATSQPPNQTQSTV) are compositionally biased toward polar residues. Positions 806-823 (LHPPRLPSPHPPLQPMTA) are enriched in pro residues. 3 stretches are compositionally biased toward low complexity: residues 824-857 (PPSQ…LLQH), 865-874 (GLPSQPSQGQ), and 891-901 (QLPASQSALQP). The segment covering 902-932 (QQPPREQPLPPAPLAMPHIKPPPTTPIPQLP) has biased composition (pro residues). Residues 962–972 (KPLSSLSTHHP) show a composition bias toward low complexity. Residues 1012 to 1023 (HPTTGLHQVPSQ) are compositionally biased toward polar residues. Residues 1027 to 1053 (PQHPFVPGGPPPITPPSCPPTSTPPAG) are compositionally biased toward pro residues. Low complexity predominate over residues 1054-1077 (PSSSSQPPCSAAVSSGGSVPGAPS). Phosphoserine is present on residues serine 1098, serine 1105, and serine 1107. Pro residues predominate over residues 1098–1109 (SPPPPPRSPSPE). Threonine 1111 carries the post-translational modification Phosphothreonine. Positions 1148–1203 (GSKLAKKREEAIEKAKREAEQKAREEREREKEKEKEREREREREREAERAAKASSS) form a coiled coil. Lysine 1150 bears the N6-acetyllysine mark. The span at 1154–1198 (KREEAIEKAKREAEQKAREEREREKEKEKEREREREREREAERAA) shows a compositional bias: basic and acidic residues. A disordered region spans residues 1154-1238 (KREEAIEKAK…TTIAAVPPYI (85 aa)). Residue tyrosine 1251 is modified to Phosphotyrosine. Serine 1258 is modified (phosphoserine).

In terms of assembly, interacts with HDAC1 and ATN1. Interaction with ATN1 is improved when the poly-Gln region of ATN1 is extended. Interacts with FAT1.

Its subcellular location is the nucleus. It is found in the PML body. Its function is as follows. Plays a role as a transcriptional repressor during development. May play a role in the control of cell survival. The chain is Arginine-glutamic acid dipeptide repeats protein (Rere) from Mus musculus (Mouse).